A 70-amino-acid chain; its full sequence is Small ribosomal subunit protein bS21 (70 aa).

It belongs to the bacterial ribosomal protein bS21 family.

In Campylobacter fetus subsp. fetus (strain 82-40), this protein is Small ribosomal subunit protein bS21.